The chain runs to 214 residues: Calcineurin B-like protein 8 (214 aa).

EF-hand domains follow at residues 35–70 (EIEA…RNGS), 71–106 (MQNL…FHPY), 108–143 (PEHE…LLGE), and 152–187 (SIEA…NPSI). The Ca(2+) site is built by aspartate 165, asparagine 167, aspartate 169, lysine 171, and glutamate 176. Serine 205 carries the phosphoserine modification.

Belongs to the calcineurin regulatory subunit family. In terms of assembly, interacts with CIPK23. Interacts with CIPK14 at the cell membrane exclusively.

It localises to the cytoplasm. The protein resides in the nucleus. It is found in the cell membrane. Acts as a calcium sensor. CBL proteins interact with CIPK serine-threonine protein kinases. Binding of a CBL protein to the regulatory NAF domain of a CIPK protein lead to the activation of the kinase in a calcium-dependent manner. The sequence is that of Calcineurin B-like protein 8 (CBL8) from Arabidopsis thaliana (Mouse-ear cress).